A 209-amino-acid chain; its full sequence is MKKAIIGRKVGMTQIFDEKGKVIPVTVVEAGPCVVVQKKTLENDGYEAIQVGFDEIREKLANKPRKGHFAKAGATLRRTLKEFRLDDISQYEVGNEIKADVFGAGDKVDVSAVSKGKGFQGSIKRWNQQRGPMTHGSKFHRAPGSMGASSDPSRTFKNKRMPGHMGSVNTTVLNLEVVKVIAEKNLILIKGGIPGPNKGTVVIKDTVRA.

The disordered stretch occupies residues 128 to 154 (QQRGPMTHGSKFHRAPGSMGASSDPSR).

The protein belongs to the universal ribosomal protein uL3 family. As to quaternary structure, part of the 50S ribosomal subunit. Forms a cluster with proteins L14 and L19.

Functionally, one of the primary rRNA binding proteins, it binds directly near the 3'-end of the 23S rRNA, where it nucleates assembly of the 50S subunit. This chain is Large ribosomal subunit protein uL3, found in Clostridium beijerinckii (strain ATCC 51743 / NCIMB 8052) (Clostridium acetobutylicum).